The following is a 305-amino-acid chain: Ornithine carbamoyltransferase (305 aa).

Carbamoyl phosphate is bound by residues 47 to 50 (STRT), Arg98, and 125 to 128 (HPCQ). Residues Asn156, Asp221, and 225–226 (SM) contribute to the L-ornithine site. Carbamoyl phosphate is bound by residues 262–263 (CL) and Arg290.

It belongs to the aspartate/ornithine carbamoyltransferase superfamily. OTCase family.

The protein localises to the cytoplasm. It catalyses the reaction carbamoyl phosphate + L-ornithine = L-citrulline + phosphate + H(+). Its pathway is amino-acid biosynthesis; L-arginine biosynthesis; L-arginine from L-ornithine and carbamoyl phosphate: step 1/3. In terms of biological role, reversibly catalyzes the transfer of the carbamoyl group from carbamoyl phosphate (CP) to the N(epsilon) atom of ornithine (ORN) to produce L-citrulline. The chain is Ornithine carbamoyltransferase from Methanococcus vannielii (strain ATCC 35089 / DSM 1224 / JCM 13029 / OCM 148 / SB).